The following is a 225-amino-acid chain: Cytidylate kinase (225 aa).

Residue G11–T19 coordinates ATP.

Belongs to the cytidylate kinase family. Type 1 subfamily.

The protein localises to the cytoplasm. The enzyme catalyses CMP + ATP = CDP + ADP. It catalyses the reaction dCMP + ATP = dCDP + ADP. The polypeptide is Cytidylate kinase (Anoxybacillus flavithermus (strain DSM 21510 / WK1)).